The sequence spans 98 residues: Large ribosomal subunit protein bL28 (98 aa).

Part of the 50S ribosomal subunit.

The sequence is that of Large ribosomal subunit protein bL28 (rpmB) from Thermus thermophilus (strain ATCC 27634 / DSM 579 / HB8).